Here is a 160-residue protein sequence, read N- to C-terminus: Nucleotide-binding protein PSHAa2277 (160 aa).

The protein belongs to the YajQ family.

Nucleotide-binding protein. The protein is Nucleotide-binding protein PSHAa2277 of Pseudoalteromonas translucida (strain TAC 125).